We begin with the raw amino-acid sequence, 152 residues long: Transcriptional regulator MraZ (152 aa).

SpoVT-AbrB domains follow at residues 5-52 (ATMV…PLPE) and 81-124 (ASEC…DEQT).

This sequence belongs to the MraZ family. As to quaternary structure, forms oligomers.

It localises to the cytoplasm. The protein resides in the nucleoid. In terms of biological role, negatively regulates its own expression and that of the subsequent genes in the proximal part of the division and cell wall (dcw) gene cluster. Acts by binding directly to DNA. May also regulate the expression of genes outside the dcw cluster. The chain is Transcriptional regulator MraZ from Yersinia pseudotuberculosis serotype O:1b (strain IP 31758).